Consider the following 213-residue polypeptide: ATP phosphoribosyltransferase (213 aa).

This sequence belongs to the ATP phosphoribosyltransferase family. Short subfamily. As to quaternary structure, heteromultimer composed of HisG and HisZ subunits.

Its subcellular location is the cytoplasm. The enzyme catalyses 1-(5-phospho-beta-D-ribosyl)-ATP + diphosphate = 5-phospho-alpha-D-ribose 1-diphosphate + ATP. It participates in amino-acid biosynthesis; L-histidine biosynthesis; L-histidine from 5-phospho-alpha-D-ribose 1-diphosphate: step 1/9. Catalyzes the condensation of ATP and 5-phosphoribose 1-diphosphate to form N'-(5'-phosphoribosyl)-ATP (PR-ATP). Has a crucial role in the pathway because the rate of histidine biosynthesis seems to be controlled primarily by regulation of HisG enzymatic activity. This is ATP phosphoribosyltransferase from Listeria welshimeri serovar 6b (strain ATCC 35897 / DSM 20650 / CCUG 15529 / CIP 8149 / NCTC 11857 / SLCC 5334 / V8).